The following is a 531-amino-acid chain: Non-muscle caldesmon (531 aa).

Residues 20–200 (AYQRNDDDEE…LKGGNLGENQ (181 aa)) are myosin and calmodulin-binding. Residues 21-379 (YQRNDDDEEE…KKPFKCFTPK (359 aa)) are disordered. The span at 41-50 (QERLRQKQEE) shows a compositional bias: basic and acidic residues. The span at 54–68 (GQVTDQVEAHVQNSA) shows a compositional bias: polar residues. A compositionally biased stretch (basic and acidic residues) spans 93-116 (RLARREERRQKRLQEALERQKEFD). The span at 120–133 (TDGSLSVPSRRMQN) shows a compositional bias: polar residues. Position 123 is a phosphoserine (Ser-123). The segment covering 143–156 (GEEKGESRSGRYEM) has biased composition (basic and acidic residues). Positions 162–172 (VITSYQKNSYQ) are enriched in polar residues. The span at 200–227 (QIKDEKIKKDKEPKEEVKNFLDRKKGFT) shows a compositional bias: basic and acidic residues. At Ser-249 the chain carries Phosphoserine; by CDK1. 2 stretches are compositionally biased toward basic and acidic residues: residues 271–297 (AGKR…KQKQ) and 305–372 (EELK…DKKP). The tropomyosin-binding stretch occupies residues 303–360 (ELEELKKKREERRKVLEEEEQRRKQEEADRKAREEEEKRRLKEEIERRRAEAAEKRQK). Ser-382 carries the post-translational modification Phosphoserine. Lys-384 participates in a covalent cross-link: Glycyl lysine isopeptide (Lys-Gly) (interchain with G-Cter in SUMO2). A strong actin-binding region spans residues 392–424 (LNKSVQKSGVKSTHQAAVVSKIDSRLEQYTNAI). Residue Ser-395 is modified to Phosphoserine. Positions 402 to 412 (KSTHQAAVVSK) are tropomyosin-binding. The segment at 454–460 (WEKGSVF) is calmodulin-binding. Residues 458–531 (SVFSSPSASG…VDKVTSPTKV (74 aa)) form a disordered region. A compositionally biased stretch (polar residues) spans 459-471 (VFSSPSASGTPNK). Ser-462 is modified (phosphoserine; by CDK1). Thr-468 is subject to Phosphothreonine; by CDK1. Phosphoserine; by CDK1 is present on residues Ser-491 and Ser-497. The segment covering 503 to 522 (SDLRPGDVSGKRNLWEKQSV) has biased composition (basic and acidic residues). The interval 506 to 531 (RPGDVSGKRNLWEKQSVDKVTSPTKV) is weak actin-binding. Ser-527 is modified (phosphoserine; by CDK1).

This sequence belongs to the caldesmon family. In non-muscle cells, phosphorylation by CDK1 during mitosis causes caldesmon to dissociate from microfilaments. Phosphorylation reduces caldesmon binding to actin, myosin, and calmodulin as well as its inhibition of actomyosin ATPase activity. Phosphorylation also occurs in both quiescent and dividing smooth muscle cells with similar effects on the interaction with actin and calmodulin and on microfilaments reorganization. CDK1-mediated phosphorylation promotes Schwann cell migration during peripheral nerve regeneration. In terms of tissue distribution, high-molecular-weight caldesmon (h-caldesmon) is predominantly expressed in smooth muscles, whereas low-molecular-weight caldesmon (l-caldesmon) is widely distributed in non-muscle tissues and cells. Not expressed in skeletal muscle or heart.

Its subcellular location is the cytoplasm. The protein resides in the cytoskeleton. It localises to the myofibril. It is found in the stress fiber. Its function is as follows. Actin- and myosin-binding protein implicated in the regulation of actomyosin interactions in smooth muscle and nonmuscle cells (could act as a bridge between myosin and actin filaments). Stimulates actin binding of tropomyosin which increases the stabilization of actin filament structure. In muscle tissues, inhibits the actomyosin ATPase by binding to F-actin. This inhibition is attenuated by calcium-calmodulin and is potentiated by tropomyosin. Interacts with actin, myosin, two molecules of tropomyosin and with calmodulin. Also plays an essential role during cellular mitosis and receptor capping. Involved in Schwann cell migration during peripheral nerve regeneration. The sequence is that of Non-muscle caldesmon (Cald1) from Rattus norvegicus (Rat).